The sequence spans 882 residues: Valine--tRNA ligase (882 aa).

A 'HIGH' region motif is present at residues P48–H58. The 'KMSKS' region signature appears at K524–S528. K527 is a binding site for ATP. Residues L809–R882 are a coiled coil. The interval G844 to Q866 is disordered. A compositionally biased stretch (basic and acidic residues) spans F845–D863.

Belongs to the class-I aminoacyl-tRNA synthetase family. ValS type 1 subfamily. In terms of assembly, monomer.

The protein resides in the cytoplasm. It catalyses the reaction tRNA(Val) + L-valine + ATP = L-valyl-tRNA(Val) + AMP + diphosphate. Functionally, catalyzes the attachment of valine to tRNA(Val). As ValRS can inadvertently accommodate and process structurally similar amino acids such as threonine, to avoid such errors, it has a 'posttransfer' editing activity that hydrolyzes mischarged Thr-tRNA(Val) in a tRNA-dependent manner. The sequence is that of Valine--tRNA ligase from Latilactobacillus sakei subsp. sakei (strain 23K) (Lactobacillus sakei subsp. sakei).